The primary structure comprises 1238 residues: DNA-directed RNA polymerase subunit beta (1238 aa).

This sequence belongs to the RNA polymerase beta chain family. The RNAP catalytic core consists of 2 alpha, 1 beta, 1 beta' and 1 omega subunit. When a sigma factor is associated with the core the holoenzyme is formed, which can initiate transcription.

The enzyme catalyses RNA(n) + a ribonucleoside 5'-triphosphate = RNA(n+1) + diphosphate. Functionally, DNA-dependent RNA polymerase catalyzes the transcription of DNA into RNA using the four ribonucleoside triphosphates as substrates. This Clostridioides difficile (strain 630) (Peptoclostridium difficile) protein is DNA-directed RNA polymerase subunit beta.